The following is a 207-amino-acid chain: Large ribosomal subunit protein eL13 (207 aa).

It belongs to the eukaryotic ribosomal protein eL13 family. As to quaternary structure, component of the 60S large ribosomal subunit (LSU).

Its subcellular location is the cytoplasm. Component of the ribosome, a large ribonucleoprotein complex responsible for the synthesis of proteins in the cell. The small ribosomal subunit (SSU) binds messenger RNAs (mRNAs) and translates the encoded message by selecting cognate aminoacyl-transfer RNA (tRNA) molecules. The large subunit (LSU) contains the ribosomal catalytic site termed the peptidyl transferase center (PTC), which catalyzes the formation of peptide bonds, thereby polymerizing the amino acids delivered by tRNAs into a polypeptide chain. The nascent polypeptides leave the ribosome through a tunnel in the LSU and interact with protein factors that function in enzymatic processing, targeting, and the membrane insertion of nascent chains at the exit of the ribosomal tunnel. As part of the LSU, it is probably required for its formation and the maturation of rRNAs. The protein is Large ribosomal subunit protein eL13 (rpl-13) of Caenorhabditis elegans.